Here is a 245-residue protein sequence, read N- to C-terminus: 1-(5-phosphoribosyl)-5-[(5-phosphoribosylamino)methylideneamino] imidazole-4-carboxamide isomerase (245 aa).

Asp7 acts as the Proton acceptor in catalysis. Residue Asp129 is the Proton donor of the active site.

The protein belongs to the HisA/HisF family.

The protein localises to the cytoplasm. The enzyme catalyses 1-(5-phospho-beta-D-ribosyl)-5-[(5-phospho-beta-D-ribosylamino)methylideneamino]imidazole-4-carboxamide = 5-[(5-phospho-1-deoxy-D-ribulos-1-ylimino)methylamino]-1-(5-phospho-beta-D-ribosyl)imidazole-4-carboxamide. It functions in the pathway amino-acid biosynthesis; L-histidine biosynthesis; L-histidine from 5-phospho-alpha-D-ribose 1-diphosphate: step 4/9. This Escherichia fergusonii (strain ATCC 35469 / DSM 13698 / CCUG 18766 / IAM 14443 / JCM 21226 / LMG 7866 / NBRC 102419 / NCTC 12128 / CDC 0568-73) protein is 1-(5-phosphoribosyl)-5-[(5-phosphoribosylamino)methylideneamino] imidazole-4-carboxamide isomerase.